Here is a 309-residue protein sequence, read N- to C-terminus: MSSLRTDDDTWDIASSVGATAVMVAAARAAETERHDALINDPYAKVLVEGAGAGAWRFIADEDLVAKASESDTEVGALFEHMKNYQAVRTHFFDAFFSAAVDAGVRQIVILASGLDSRAFRLPWPAGTVVYEIDQPLVLDYKSSTLAAHGVAPTAERREVPIDLRQDWPAALVATGFDPARPTAWLAEGLLMYLPADAQDRLFAQITELSAPGSQVAAESMGVHAPDRRERMRERFASIASQIDIEPMDITELTYEDPDRAEVAEWLAAHGWTAQAVPSQDAMRRLDRYVEVADSDGQSFSTFTTGTKL.

S-adenosyl-L-methionine-binding positions include D134 and 163 to 164 (DL).

The protein belongs to the UPF0677 family.

In terms of biological role, exhibits S-adenosyl-L-methionine-dependent methyltransferase activity. The sequence is that of Putative S-adenosyl-L-methionine-dependent methyltransferase Mflv_0743 from Mycolicibacterium gilvum (strain PYR-GCK) (Mycobacterium gilvum (strain PYR-GCK)).